Reading from the N-terminus, the 58-residue chain is uncharacterized protein (58 aa).

The protein localises to the plastid. It is found in the chloroplast. This is an uncharacterized protein from Pyropia yezoensis (Susabi-nori).